A 430-amino-acid polypeptide reads, in one-letter code: MLLKLDSRKADFQADFTRLVDERRESEGDVSRDVSAIIADVKKRGDVAIAELTQKFDRHDLNKGGWQLTQEEIKKACDSLPSELMDALKLAATRIRYCHENQLPESSEMTDAAGVRMGVRWQAVEAAGLYVPGGRAAYCSSVLMNAVPAKVAGVKRLVMVTPTPDGFVNPAVIAAAVISEVDEIWKIGGAQAVAALALGTEKIKPVDVVVGPGNAWVAEAKRQLYGQVGIDMVAGPSEIVVVADKDNDPEWLAADLLSQAEHDPTSQSILISDSEDLIEKTIEAVGRRLEKLETQKVARESWDKHGATILVQSLDEAPALVDRLAPEHLELAVADPDALFANVHHSGSVFLGRYTPEAIGDYVGGPNHVLPTGRRARFSSGLSVIDFMKRTTYLNCSQEALSKIGPAAVTLAKAEGLPAHAESVISRLNK.

Positions 130, 191, and 214 each coordinate NAD(+). Substrate-binding residues include Ser237, Gln259, and His262. Zn(2+) contacts are provided by Gln259 and His262. Residues Glu327 and His328 each act as proton acceptor in the active site. Residues His328, Asp361, Glu415, and His420 each contribute to the substrate site. Asp361 provides a ligand contact to Zn(2+). His420 provides a ligand contact to Zn(2+).

It belongs to the histidinol dehydrogenase family. It depends on Zn(2+) as a cofactor.

The enzyme catalyses L-histidinol + 2 NAD(+) + H2O = L-histidine + 2 NADH + 3 H(+). The protein operates within amino-acid biosynthesis; L-histidine biosynthesis; L-histidine from 5-phospho-alpha-D-ribose 1-diphosphate: step 9/9. In terms of biological role, catalyzes the sequential NAD-dependent oxidations of L-histidinol to L-histidinaldehyde and then to L-histidine. The protein is Histidinol dehydrogenase (hisD) of Zymomonas mobilis subsp. mobilis (strain ATCC 31821 / ZM4 / CP4).